The chain runs to 205 residues: Beta-crystallin B2 (205 aa).

Position 2 is an N-acetylalanine (alanine 2). The N-terminal arm stretch occupies residues 2–16 (ASDHQTQAGKPQPLN). Beta/gamma crystallin 'Greek key' domains follow at residues 17 to 56 (PKIIIFEQENFQGHSHELNGPCPNLKETGVEKAGSVLVQA) and 57 to 101 (GPWV…RPIK). The interval 102-106 (VDSQE) is connecting peptide. Beta/gamma crystallin 'Greek key' domains lie at 107-148 (HKII…RVQS) and 149-191 (GTWV…RRIR). The C-terminal arm stretch occupies residues 193-205 (MQWHQRGAFHPTN).

The protein belongs to the beta/gamma-crystallin family. In terms of assembly, homo/heterodimer, or complexes of higher-order. The structure of beta-crystallin oligomers seems to be stabilized through interactions between the N-terminal arms.

Functionally, crystallins are the dominant structural components of the vertebrate eye lens. This chain is Beta-crystallin B2 (CRYBB2), found in Oryctolagus cuniculus (Rabbit).